A 180-amino-acid polypeptide reads, in one-letter code: ATP-dependent protease subunit HslV (180 aa).

Threonine 8 is an active-site residue. Na(+) contacts are provided by glycine 165, cysteine 168, and threonine 171.

Belongs to the peptidase T1B family. HslV subfamily. In terms of assembly, a double ring-shaped homohexamer of HslV is capped on each side by a ring-shaped HslU homohexamer. The assembly of the HslU/HslV complex is dependent on binding of ATP.

It localises to the cytoplasm. The catalysed reaction is ATP-dependent cleavage of peptide bonds with broad specificity.. With respect to regulation, allosterically activated by HslU binding. In terms of biological role, protease subunit of a proteasome-like degradation complex believed to be a general protein degrading machinery. The chain is ATP-dependent protease subunit HslV from Halalkalibacterium halodurans (strain ATCC BAA-125 / DSM 18197 / FERM 7344 / JCM 9153 / C-125) (Bacillus halodurans).